Reading from the N-terminus, the 406-residue chain is MASVWTDIRAVLPSTVSEFPLDFSEKIDLSVLKCLELSRDQLYSEADCPVSAERAQIIIDYSWEKLNIGTWRDVDKEWRRVYSYGCLFKVLSLCHGNPPQNIIQEAVRTCDMSLLMGAAIMDNILQRLVGILRNKIKTTCPNKAERSEEPFSKKRKHDCKSEPVLNPTKEVPRIHCPSLERFRSDFLDPKKPVIIEGITDLWPAFTQHPWSIDYLRTVAGCRTVPIEVGSKYTDEEWSQKLITVNDFIDRYITGTEEDGVGYLAQHQLFDQVPELKEDIRIPDYCCLGEGDEDDITINAWFGPGGTVSPLHQDPQQNFLAQVVGRKYIRLYSPEDTKSLYPHESQLLHNTSQVEVENPDLVKFPDFSRASYEECVLCPGDVLFIPLQHWYYVRSLELSFSVSFWWS.

Over residues 143–152 (KAERSEEPFS) the composition is skewed to basic and acidic residues. Residues 143–162 (KAERSEEPFSKKRKHDCKSE) form a disordered region. Positions 270–406 (DQVPELKEDI…LSFSVSFWWS (137 aa)) constitute a JmjC domain. Positions 311 and 313 each coordinate Fe cation.

Fe(2+) serves as cofactor.

The protein resides in the nucleus. It catalyses the reaction N(6),N(6)-dimethyl-L-lysyl(36)-[histone H3] + 2 2-oxoglutarate + 2 O2 = L-lysyl(36)-[histone H3] + 2 formaldehyde + 2 succinate + 2 CO2. Functionally, histone demethylase required for G2/M phase cell cycle progression. Specifically demethylates dimethylated 'Lys-36' (H3K36me2) of histone H3, an epigenetic repressive mark, thereby acting as a transcription activator. May play a role in the regulation of the circadian clock. This Danio rerio (Zebrafish) protein is Lysine-specific demethylase 8 (kdm8).